The sequence spans 689 residues: Elongation factor G (689 aa).

Positions 9-283 (AKFRNIGIMA…AIIEFMPSPL (275 aa)) constitute a tr-type G domain. GTP is bound by residues 18 to 25 (AHIDAGKT), 82 to 86 (DTPGH), and 136 to 139 (NKMD).

Belongs to the TRAFAC class translation factor GTPase superfamily. Classic translation factor GTPase family. EF-G/EF-2 subfamily.

It localises to the cytoplasm. Its function is as follows. Catalyzes the GTP-dependent ribosomal translocation step during translation elongation. During this step, the ribosome changes from the pre-translocational (PRE) to the post-translocational (POST) state as the newly formed A-site-bound peptidyl-tRNA and P-site-bound deacylated tRNA move to the P and E sites, respectively. Catalyzes the coordinated movement of the two tRNA molecules, the mRNA and conformational changes in the ribosome. This Clostridium botulinum (strain Okra / Type B1) protein is Elongation factor G.